Reading from the N-terminus, the 300-residue chain is 7-methylguanosine phosphate-specific 5'-nucleotidase (300 aa).

The Nucleophile role is filled by aspartate 41. Positions 41 and 43 each coordinate Mg(2+). Residue aspartate 43 is the Proton donor of the active site. Glutamate 88 contacts CMP. Glutamate 88 serves as a coordination point for N(7)-methyl-GMP. Substrate-binding positions include 156–157 and lysine 205; that span reads SA. Aspartate 230 contacts Mg(2+). At lysine 256 the chain carries N6-acetyllysine.

This sequence belongs to the pyrimidine 5'-nucleotidase family. As to quaternary structure, monomer.

The protein localises to the cytoplasm. The catalysed reaction is N(7)-methyl-GMP + H2O = N(7)-methylguanosine + phosphate. It catalyses the reaction CMP + H2O = cytidine + phosphate. It carries out the reaction a ribonucleoside 5'-phosphate + H2O = a ribonucleoside + phosphate. In terms of biological role, specifically hydrolyzes 7-methylguanosine monophosphate (m(7)GMP) to 7-methylguanosine and inorganic phosphate. The specific activity for m(7)GMP may protect cells against undesired salvage of m(7)GMP and its incorporation into nucleic acids. Also has weak activity for CMP. UMP and purine nucleotides are poor substrates. This Rattus norvegicus (Rat) protein is 7-methylguanosine phosphate-specific 5'-nucleotidase (Nt5c3b).